Reading from the N-terminus, the 510-residue chain is NAD(P)H-quinone oxidoreductase subunit 2 B, chloroplastic (510 aa).

Helical transmembrane passes span 24–44, 57–77, 99–119, 124–144, 149–169, 183–203, 227–247, 295–315, 323–343, 354–374, 395–415, 418–438, and 484–504; these read LLFF…GLIL, IPWL…ALLF, IFQF…VEYI, MAIT…MFLC, LITI…LSGY, YLLM…WLYG, PGIS…LSPA, WHLL…LIAI, MLAY…IVGD, YMLF…LFGL, ALSL…AGFF, LYLF…IGLL, and MIVC…IIAI.

It belongs to the complex I subunit 2 family. In terms of assembly, NDH is composed of at least 16 different subunits, 5 of which are encoded in the nucleus.

The protein localises to the plastid. It is found in the chloroplast thylakoid membrane. It carries out the reaction a plastoquinone + NADH + (n+1) H(+)(in) = a plastoquinol + NAD(+) + n H(+)(out). The enzyme catalyses a plastoquinone + NADPH + (n+1) H(+)(in) = a plastoquinol + NADP(+) + n H(+)(out). In terms of biological role, NDH shuttles electrons from NAD(P)H:plastoquinone, via FMN and iron-sulfur (Fe-S) centers, to quinones in the photosynthetic chain and possibly in a chloroplast respiratory chain. The immediate electron acceptor for the enzyme in this species is believed to be plastoquinone. Couples the redox reaction to proton translocation, and thus conserves the redox energy in a proton gradient. The protein is NAD(P)H-quinone oxidoreductase subunit 2 B, chloroplastic of Guizotia abyssinica (Niger).